A 297-amino-acid polypeptide reads, in one-letter code: Acetylglutamate kinase (297 aa).

Substrate contacts are provided by residues 70 to 71 (GG), arginine 92, and asparagine 194.

It belongs to the acetylglutamate kinase family. ArgB subfamily.

The protein resides in the cytoplasm. The enzyme catalyses N-acetyl-L-glutamate + ATP = N-acetyl-L-glutamyl 5-phosphate + ADP. It functions in the pathway amino-acid biosynthesis; L-arginine biosynthesis; N(2)-acetyl-L-ornithine from L-glutamate: step 2/4. Functionally, catalyzes the ATP-dependent phosphorylation of N-acetyl-L-glutamate. This chain is Acetylglutamate kinase, found in Herminiimonas arsenicoxydans.